The following is a 61-amino-acid chain: Large ribosomal subunit protein uL30 (61 aa).

Belongs to the universal ribosomal protein uL30 family. Part of the 50S ribosomal subunit.

This Dichelobacter nodosus (strain VCS1703A) protein is Large ribosomal subunit protein uL30.